Reading from the N-terminus, the 123-residue chain is DPEP2 neighbor protein (123 aa).

The segment at 67–123 (APLATPTKAEAEKPAPRRAPKRRQATIESDKDLGCSSPKIRRLEHRGRRLTPQKLAG) is disordered. A compositionally biased stretch (basic residues) spans 105–117 (KIRRLEHRGRRLT).

This is DPEP2 neighbor protein from Homo sapiens (Human).